Consider the following 514-residue polypeptide: Cytochrome P450 monooxygenase ptmQ (514 aa).

The chain crosses the membrane as a helical span at residues 3–23; the sequence is YVAQSPWIATLIVTATTYCTL. Asparagine 148 carries N-linked (GlcNAc...) asparagine glycosylation. Residue cysteine 452 coordinates heme. N-linked (GlcNAc...) asparagine glycosylation is present at asparagine 486.

It belongs to the cytochrome P450 family. The cofactor is heme.

The protein resides in the membrane. Its pathway is secondary metabolite biosynthesis. Its function is as follows. Cytochrome P450 monooxygenase; part of the gene cluster that mediates the biosynthesis of the indole diterpenes penitrems. The geranylgeranyl diphosphate (GGPP) synthase ptmG catalyzes the first step in penitrem biosynthesis via conversion of farnesyl pyrophosphate and isopentyl pyrophosphate into geranylgeranyl pyrophosphate (GGPP). Condensation of indole-3-glycerol phosphate with GGPP by the prenyl transferase ptmC then forms 3-geranylgeranylindole (3-GGI). Epoxidation by the FAD-dependent monooxygenase ptmM leads to a epoxidized-GGI that is substrate of the terpene cyclase ptmB for cyclization to yield paspaline. Paspaline is subsequently converted to 13-desoxypaxilline by the cytochrome P450 monooxygenase ptmP, the latter being then converted to paxilline by the cytochrome P450 monooxygenase ptmQ. Paxilline is converted to beta-paxitriol via C-10 ketoreduction by the short-chain dehydrogenase ptmH which can be monoprenylated at the C-20 by the indole diterpene prenyltransferase ptmD. A two-step elimination (acetylation and elimination) process performed by the O-acetyltransferase ptmV and ptmI leads to the production of the prenylated form of penijanthine. The FAD-linked oxidoreductase ptmO then converts the prenylated form of penijanthine into PC-M5 which is in turn transformed into PC-M4 by the aromatic dimethylallyltransferase ptmE. Five sequential oxidative transformations performed by the cytochrome P450 monooxygenases ptmK, ptmU, ptmL, ptmN and ptmJ yield the various penitrem compounds. PtmK, ptmU and ptmM are involved in the formation of the key bicyclic ring of penitrem C via the formation of the intermediates secopenitrem D and penitrem D. PtmL catalyzes the epoxidation of penitrem D and C to yield penitrem B and F, respectively. PtmJ catalyzes the last benzylic hydroxylation to convert penitrem B to prenitrem E and penitrem F to penitrem A. The protein is Cytochrome P450 monooxygenase ptmQ of Penicillium ochrochloron.